The sequence spans 216 residues: Cytidylate kinase (216 aa).

7-15 (GPSGTGKST) provides a ligand contact to ATP.

This sequence belongs to the cytidylate kinase family. Type 1 subfamily.

The protein localises to the cytoplasm. The catalysed reaction is CMP + ATP = CDP + ADP. The enzyme catalyses dCMP + ATP = dCDP + ADP. This is Cytidylate kinase from Chlamydia pneumoniae (Chlamydophila pneumoniae).